The following is a 253-amino-acid chain: 5-oxoprolinase subunit A (253 aa).

This sequence belongs to the LamB/PxpA family. As to quaternary structure, forms a complex composed of PxpA, PxpB and PxpC.

It carries out the reaction 5-oxo-L-proline + ATP + 2 H2O = L-glutamate + ADP + phosphate + H(+). Its function is as follows. Catalyzes the cleavage of 5-oxoproline to form L-glutamate coupled to the hydrolysis of ATP to ADP and inorganic phosphate. This is 5-oxoprolinase subunit A from Bacillus cereus (strain 03BB102).